Here is a 430-residue protein sequence, read N- to C-terminus: MAYDKSIAAFEEAYKVIPGGVDSPVRAFSGVEGTPPFIERGEGAYLFDIDGNRYIDYVQSWGPLIFGHTDADIEASVIDSVKKGLSFGAPTTVETELAEEIVLMFESIDKVRFVSSGTEAVMSAIRLARGATGRDNILKFTGCYHGHSDSLLVQAGSGLATFGTPSSPGVPADLTKHTLLGTYNDIESVEKCFADSPEGIACVIIEPIAGNMGLVPADETFLQQLRALCDAHGTLLIFDEVMSGFRASLKGAQGITTVKPDMVTLGKVIGAGMPVGAFGAGAETMAQLSPEGPVYQAGTLSGNPVAMAAGLTSLRKLKANPAIYVELGNKAKKLVEGLKRAADSVNVPMVTDVRGSMFGFFFSDKPVKNFADAMENDQKLFAKFHKGMLDRGIYLACSSFETGFISTAITDEMIDETVKAAYETLKEIKG.

Residue K267 is modified to N6-(pyridoxal phosphate)lysine.

Belongs to the class-III pyridoxal-phosphate-dependent aminotransferase family. HemL subfamily. As to quaternary structure, homodimer. The cofactor is pyridoxal 5'-phosphate.

It is found in the cytoplasm. The catalysed reaction is (S)-4-amino-5-oxopentanoate = 5-aminolevulinate. The protein operates within porphyrin-containing compound metabolism; protoporphyrin-IX biosynthesis; 5-aminolevulinate from L-glutamyl-tRNA(Glu): step 2/2. In Sulfurovum sp. (strain NBC37-1), this protein is Glutamate-1-semialdehyde 2,1-aminomutase.